Reading from the N-terminus, the 132-residue chain is Putative holo-[acyl-carrier-protein] synthase (132 aa).

Mg(2+) contacts are provided by Asp-6 and Glu-67.

The protein belongs to the P-Pant transferase superfamily. AcpS family.

It catalyses the reaction apo-[ACP] + CoA = holo-[ACP] + adenosine 3',5'-bisphosphate + H(+). Its function is as follows. Transfers the 4'-phosphopantetheine moiety from coenzyme A to a Ser of acyl-carrier-protein. This Schizosaccharomyces pombe (strain 972 / ATCC 24843) (Fission yeast) protein is Putative holo-[acyl-carrier-protein] synthase (new8).